Reading from the N-terminus, the 103-residue chain is Cyclotide vibi-I (103 aa).

Positions 1–9 (AAFALPAFA) are cleaved as a signal peptide. Positions 10-69 (SFEKDVITPAALEAVLNRKAPLSNIMMENDAILNVIANVKTVISNPVLEEALLKTNHGVN) are excised as a propeptide. Positions 70-99 (GIPCGESCVWIPCLTSTVGCSCKSKVCYRN) form a cross-link, cyclopeptide (Gly-Asn). 3 cysteine pairs are disulfide-bonded: Cys73–Cys89, Cys77–Cys91, and Cys82–Cys96. Positions 100–103 (SLDN) are excised as a propeptide.

This is a cyclic peptide.

Probably participates in a plant defense mechanism. In Viola biflora (Yellow wood violet), this protein is Cyclotide vibi-I.